The sequence spans 416 residues: Histidine--tRNA ligase (416 aa).

Belongs to the class-II aminoacyl-tRNA synthetase family. As to quaternary structure, homodimer.

It is found in the cytoplasm. It carries out the reaction tRNA(His) + L-histidine + ATP = L-histidyl-tRNA(His) + AMP + diphosphate + H(+). In Dictyoglomus thermophilum (strain ATCC 35947 / DSM 3960 / H-6-12), this protein is Histidine--tRNA ligase.